A 240-amino-acid polypeptide reads, in one-letter code: ATP-dependent dethiobiotin synthetase BioD 1 (240 aa).

13–18 (DVGKTV) is a binding site for ATP. T17 lines the Mg(2+) pocket. K38 is a catalytic residue. Substrate is bound at residue S42. ATP-binding positions include D55, 116 to 119 (EGAG), 176 to 177 (NE), 205 to 207 (PYL), and E212. D55 and E116 together coordinate Mg(2+).

This sequence belongs to the dethiobiotin synthetase family. In terms of assembly, homodimer. It depends on Mg(2+) as a cofactor.

The protein localises to the cytoplasm. The enzyme catalyses (7R,8S)-7,8-diammoniononanoate + CO2 + ATP = (4R,5S)-dethiobiotin + ADP + phosphate + 3 H(+). Its pathway is cofactor biosynthesis; biotin biosynthesis; biotin from 7,8-diaminononanoate: step 1/2. Its function is as follows. Catalyzes a mechanistically unusual reaction, the ATP-dependent insertion of CO2 between the N7 and N8 nitrogen atoms of 7,8-diaminopelargonic acid (DAPA, also called 7,8-diammoniononanoate) to form a ureido ring. In Yersinia pestis, this protein is ATP-dependent dethiobiotin synthetase BioD 1.